The primary structure comprises 280 residues: Fructose-1,6-bisphosphatase class 1 (280 aa).

Mg(2+)-binding residues include glutamate 64, aspartate 83, leucine 85, and aspartate 86. Residues 86–89 (DGSS), tyrosine 189, and lysine 220 each bind substrate. Position 226 (glutamate 226) interacts with Mg(2+).

This sequence belongs to the FBPase class 1 family. As to quaternary structure, homotetramer. It depends on Mg(2+) as a cofactor.

Its subcellular location is the cytoplasm. It carries out the reaction beta-D-fructose 1,6-bisphosphate + H2O = beta-D-fructose 6-phosphate + phosphate. Its pathway is carbohydrate biosynthesis; gluconeogenesis. The protein is Fructose-1,6-bisphosphatase class 1 of Campylobacter jejuni (strain RM1221).